The chain runs to 374 residues: UDP-N-acetylglucosamine--N-acetylmuramyl-(pentapeptide) pyrophosphoryl-undecaprenol N-acetylglucosamine transferase (374 aa).

Residues Thr-13–Gly-15, Asn-124, Arg-165, Ser-193, and Gln-294 each bind UDP-N-acetyl-alpha-D-glucosamine.

The protein belongs to the glycosyltransferase 28 family. MurG subfamily.

It localises to the cell inner membrane. It carries out the reaction di-trans,octa-cis-undecaprenyl diphospho-N-acetyl-alpha-D-muramoyl-L-alanyl-D-glutamyl-meso-2,6-diaminopimeloyl-D-alanyl-D-alanine + UDP-N-acetyl-alpha-D-glucosamine = di-trans,octa-cis-undecaprenyl diphospho-[N-acetyl-alpha-D-glucosaminyl-(1-&gt;4)]-N-acetyl-alpha-D-muramoyl-L-alanyl-D-glutamyl-meso-2,6-diaminopimeloyl-D-alanyl-D-alanine + UDP + H(+). It functions in the pathway cell wall biogenesis; peptidoglycan biosynthesis. In terms of biological role, cell wall formation. Catalyzes the transfer of a GlcNAc subunit on undecaprenyl-pyrophosphoryl-MurNAc-pentapeptide (lipid intermediate I) to form undecaprenyl-pyrophosphoryl-MurNAc-(pentapeptide)GlcNAc (lipid intermediate II). The protein is UDP-N-acetylglucosamine--N-acetylmuramyl-(pentapeptide) pyrophosphoryl-undecaprenol N-acetylglucosamine transferase of Rhizobium leguminosarum bv. trifolii (strain WSM2304).